The primary structure comprises 540 residues: Suppressor of tumorigenicity 7 protein-like (540 aa).

Transmembrane regions (helical) follow at residues 24-44, 68-88, 475-495, and 502-522; these read WSWTYICALWFAMVLTMVYVL, FYVALTGTSSLISGLILIFEW, LPFFILFTAGLCSFCAMLAML, and LMGVFVKAFFSTLFAPLGFFA.

This sequence belongs to the ST7 family.

The protein resides in the membrane. This chain is Suppressor of tumorigenicity 7 protein-like (st7l), found in Danio rerio (Zebrafish).